The sequence spans 311 residues: ATP synthase subunit gamma, mitochondrial (311 aa).

A mitochondrion-targeting transit peptide spans 1-33 (MLSRIVSNNATRSVMCHQAQVGILYKTNPVRTY).

The protein belongs to the ATPase gamma chain family. F-type ATPases have 2 components, CF(1) - the catalytic core - and CF(0) - the membrane proton channel. CF(1) has five subunits: alpha(3), beta(3), gamma(1), delta(1), epsilon(1). CF(0) has three main subunits: a, b and c.

The protein resides in the mitochondrion. Its subcellular location is the mitochondrion inner membrane. Mitochondrial membrane ATP synthase (F(1)F(0) ATP synthase or Complex V) produces ATP from ADP in the presence of a proton gradient across the membrane which is generated by electron transport complexes of the respiratory chain. F-type ATPases consist of two structural domains, F(1) - containing the extramembraneous catalytic core, and F(0) - containing the membrane proton channel, linked together by a central stalk and a peripheral stalk. During catalysis, ATP synthesis in the catalytic domain of F(1) is coupled via a rotary mechanism of the central stalk subunits to proton translocation. Part of the complex F(1) domain and the central stalk which is part of the complex rotary element. The gamma subunit protrudes into the catalytic domain formed of alpha(3)beta(3). Rotation of the central stalk against the surrounding alpha(3)beta(3) subunits leads to hydrolysis of ATP in three separate catalytic sites on the beta subunits. The protein is ATP synthase subunit gamma, mitochondrial (ATP3) of Saccharomyces cerevisiae (strain ATCC 204508 / S288c) (Baker's yeast).